The chain runs to 173 residues: Alpha-crystallin A chain (173 aa).

Met1 is modified (N-acetylmethionine). The required for complex formation with BFSP1 and BFSP2 stretch occupies residues Met1–Glu63. Residue Gln6 is modified to Deamidated glutamine; partial. Ser45 is modified (phosphoserine). Gln50 is subject to Deamidated glutamine; partial. Residues Leu52–Ser162 form the sHSP domain. Residue Lys70 is modified to N6-acetyllysine. Gln90 is modified (deamidated glutamine; partial). Lys99 carries the post-translational modification N6-acetyllysine. Residue His100 coordinates Zn(2+). Asn101 carries the post-translational modification Deamidated asparagine; partial. Residues Glu102 and His107 each coordinate Zn(2+). Position 122 is a phosphoserine (Ser122). Residue Asn123 is modified to Deamidated asparagine; partial. The segment at Pro144 to Ser173 is disordered. The segment covering Gly153–Pro167 has biased composition (basic and acidic residues). Zn(2+) is bound at residue His154. The O-linked (GlcNAc) serine glycan is linked to Ser162.

It belongs to the small heat shock protein (HSP20) family. Heteromer composed of three CRYAA and one CRYAB subunits. Inter-subunit bridging via zinc ions enhances stability, which is crucial as there is no protein turn over in the lens. Can also form homodimers and homotetramers (dimers of dimers) which serve as the building blocks of homooligomers. Within homooligomers, the zinc-binding motif is created from residues of 3 different molecules. His-100 and Glu-102 from one molecule are ligands of the zinc ion, and His-107 and His-154 residues from additional molecules complete the site with tetrahedral coordination geometry. Part of a complex required for lens intermediate filament formation composed of BFSP1, BFSP2 and CRYAA. Post-translationally, acetylation at Lys-70 may increase chaperone activity. Undergoes age-dependent proteolytical cleavage at the C-terminus.

Its subcellular location is the cytoplasm. It localises to the nucleus. Its function is as follows. Contributes to the transparency and refractive index of the lens. Acts as a chaperone, preventing aggregation of various proteins under a wide range of stress conditions. Required for the correct formation of lens intermediate filaments as part of a complex composed of BFSP1, BFSP2 and CRYAA. The protein is Alpha-crystallin A chain (CRYAA) of Tapirus indicus (Asiatic tapir).